The primary structure comprises 702 residues: MAKITKTFQYGKHTVTLETGEVARQASGAVIVKMDDTVLLVTAVAAKSAREGQDFFPLTVDYQEKFYAGGRIPGGFFKREGRATEKETLISRLIDRPIRPLFPEDYKNDVQIIATVMSLNPDVDGDIPALIGASAALALAGTPFMGPIGAAKVGYKNGEYILNPTVSELADSQLELVVAGTSNAVLMVESEAALLSEEVMLGAVTFGHREMQKVINAINELTVEAGTKPSTWEAPAKNDALISALKEAIGPRLGEAFQVRDKLQRRDAISAIKKDVFETLAGRVAAEGWNPAELSKEFGELEYRTMRDSVLDTKVRIDGRALDTVRPIAVKTGVLPRTHGSSLFTRGETQAIVTITLGTARDGQVIDAVAGEYKENFLFHYNFPPFSVGECGRMMGPKRREIGHGRLAKRGVLAVMPSLEAFPYTIRVVSEITESNGSSSMASVCGSSLALMDAGVPVKAPVAGIAMGLVKEGERFVVLSDILGDEDHLGDMDFKVAGTAEGISALQMDIKIEGITEEIMKQALQQAKAGRLHILGEMAHGLTAPREELSDYAPRLLTIKIHPDKIREVIGKGGSTIQAITKETGTQIDIQDDGTIVIASVNAIAAQAAKARIEQITSDVEPGRIYEGKVAKIMDFGAFVTILPGKDGLVHVSQISSDRVEKVGDVLKEGDVVKVKVLEVDKQGRIRLSMKAVEEGDAASAE.

Residues aspartate 487 and aspartate 493 each contribute to the Mg(2+) site. The region spanning 554 to 613 is the KH domain; the sequence is PRLLTIKIHPDKIREVIGKGGSTIQAITKETGTQIDIQDDGTIVIASVNAIAAQAAKARI. The S1 motif domain occupies 623 to 691; the sequence is GRIYEGKVAK…KQGRIRLSMK (69 aa).

It belongs to the polyribonucleotide nucleotidyltransferase family. Component of the RNA degradosome, which is a multiprotein complex involved in RNA processing and mRNA degradation. Mg(2+) serves as cofactor.

Its subcellular location is the cytoplasm. The catalysed reaction is RNA(n+1) + phosphate = RNA(n) + a ribonucleoside 5'-diphosphate. Involved in mRNA degradation. Catalyzes the phosphorolysis of single-stranded polyribonucleotides processively in the 3'- to 5'-direction. This Stenotrophomonas maltophilia (strain K279a) protein is Polyribonucleotide nucleotidyltransferase.